Reading from the N-terminus, the 591-residue chain is Peroxisome assembly protein 2 (591 aa).

A disordered region spans residues 1–78 (MSDSDPKPTA…TNIDTNNNTN (78 aa)). Residues 1–148 (MSDSDPKPTA…TSREGTRPAF (148 aa)) are Peroxisomal matrix-facing. Residues 7–26 (KPTAAKGAAPTSIPNSTRNP) are compositionally biased toward low complexity. Over residues 27–54 (NPTPPNPNPNPNPISTPAPTPTATPSPP) the composition is skewed to pro residues. A compositionally biased stretch (low complexity) spans 55-78 (IASSSNNGNNSTRSTNIDTNNNTN). Residues 149-175 (RVGQVDAELLDEELVELLRGQVREALR) form a helical membrane-spanning segment. Over 176–196 (YVGGGGGGGGGGGGGGVGSGV) the chain is Cytoplasmic. A helical transmembrane segment spans residues 197-222 (AQDWEAEISLALRAVLFKLTVWDHDA). The Peroxisomal matrix segment spans residues 223–246 (TYGAALQNLKYTDARRDGPALAPP). Residues 247–273 (SRWQKALYGLVTVGGRYLWAKWEDWLL) traverse the membrane as a helical segment. At 274 to 283 (EQDDGFEGPS) the chain is on the cytoplasmic side. A helical transmembrane segment spans residues 284–314 (PRVKRLARWTSALSTLHASAALVSFLVFLLH). The Peroxisomal matrix segment spans residues 315–341 (GRYRTLLDRLLRMRLAPPTSQVSREVS). Residues 342–365 (FEYLNRQLVWHAFTEFLLFVLPLV) form a helical membrane-spanning segment. The Cytoplasmic portion of the chain corresponds to 366 to 591 (GINRWRRWLA…EDGLDEDPES (226 aa)). Residues Cys-408, Cys-411, Cys-449, Cys-451, Cys-454, Cys-457, Cys-472, and Cys-475 each contribute to the Zn(2+) site. The RING-type; atypical zinc finger occupies 408–475 (CAICYRDQNS…EGEGWPCLRC (68 aa)). The tract at residues 512–591 (KAPSDHEEEE…EDGLDEDPES (80 aa)) is disordered. Composition is skewed to acidic residues over residues 517–537 (HEEE…ENEG) and 575–591 (SEDY…DPES).

Belongs to the pex2/pex10/pex12 family. As to quaternary structure, component of the PEX2-PEX10-PEX12 retrotranslocation channel, composed of PEX2, PEX10 and PEX12.

It is found in the peroxisome membrane. It catalyses the reaction [E2 ubiquitin-conjugating enzyme]-S-ubiquitinyl-L-cysteine + [acceptor protein]-L-cysteine = [E2 ubiquitin-conjugating enzyme]-L-cysteine + [acceptor protein]-S-ubiquitinyl-L-cysteine.. The protein operates within protein modification; protein ubiquitination. In terms of biological role, E3 ubiquitin-protein ligase component of a retrotranslocation channel required for peroxisome organization by mediating export of the PEX5 receptor from peroxisomes to the cytosol, thereby promoting PEX5 recycling. The retrotranslocation channel is composed of PEX2, PEX10 and PEX12; each subunit contributing transmembrane segments that coassemble into an open channel that specifically allows the passage of PEX5 through the peroxisomal membrane. PEX2 also regulates peroxisome organization by acting as a E3 ubiquitin-protein ligase. PEX2 ubiquitinates PEX5 during its passage through the retrotranslocation channel: catalyzes monoubiquitination of PEX5 at 'Cys-6', a modification that acts as a signal for PEX5 extraction into the cytosol. This Thermothelomyces thermophilus (strain ATCC 42464 / BCRC 31852 / DSM 1799) (Sporotrichum thermophile) protein is Peroxisome assembly protein 2.